A 334-amino-acid chain; its full sequence is MGPLMLDVQGCELDAEEREILRHPTVGGVILFGRNYHDRSQLSALVKTIRQAANKPLLIAVDHEGGRVQRFRNGFSRIPPMGILHKARNQATDLATECGWLMAAELLAHDIDLSFAPVLDLERGSNVIGDRSFSSDPEQVIQLASAFIDGMHQAGMKATGKHFPGHGSVRADSHLESPRDNRSWEEIEATDLVPFRELIPAGKLDAIMPAHVIYTELDDQPAGFSRFWLQEVLRGKYGFNGIIFSDDLTMEGAAVAGGYPERAQAALNAGCDMLLACNNRAGAVAILDGLQNPPASRAESLLSTNNGDWSRLTSTSRWKNTQNRVQIFTEEFVN.

Residues aspartate 62, arginine 70, arginine 131, and 161-162 (KH) contribute to the substrate site. Catalysis depends on histidine 174, which acts as the Proton donor/acceptor. The active-site Nucleophile is the aspartate 246.

Belongs to the glycosyl hydrolase 3 family. NagZ subfamily.

The protein localises to the cytoplasm. The catalysed reaction is Hydrolysis of terminal non-reducing N-acetyl-D-hexosamine residues in N-acetyl-beta-D-hexosaminides.. Its pathway is cell wall biogenesis; peptidoglycan recycling. Plays a role in peptidoglycan recycling by cleaving the terminal beta-1,4-linked N-acetylglucosamine (GlcNAc) from peptide-linked peptidoglycan fragments, giving rise to free GlcNAc, anhydro-N-acetylmuramic acid and anhydro-N-acetylmuramic acid-linked peptides. The protein is Beta-hexosaminidase of Tolumonas auensis (strain DSM 9187 / NBRC 110442 / TA 4).